A 106-amino-acid polypeptide reads, in one-letter code: MRGNIAQLMQQAQKMQENLQKAQEEIAKIEVTGSAGGGMVSVTLTGAKECRKVRIDPSLTSDPEMLEDLIAAAFNDASNKIDAESKSKMGSATAGMQLPPGMKLPF.

The disordered stretch occupies residues I81–F106.

It belongs to the YbaB/EbfC family. In terms of assembly, homodimer.

It localises to the cytoplasm. The protein resides in the nucleoid. In terms of biological role, binds to DNA and alters its conformation. May be involved in regulation of gene expression, nucleoid organization and DNA protection. This is Nucleoid-associated protein Smlt1015 from Stenotrophomonas maltophilia (strain K279a).